The sequence spans 430 residues: 3-phosphoshikimate 1-carboxyvinyltransferase (430 aa).

3-phosphoshikimate-binding residues include Lys20, Ser21, and Arg25. Lys20 is a phosphoenolpyruvate binding site. Phosphoenolpyruvate contacts are provided by Gly90 and Arg118. Residues Ser163, Ser164, Gln165, Ser191, Asp311, and Lys338 each coordinate 3-phosphoshikimate. Residue Gln165 coordinates phosphoenolpyruvate. Asp311 acts as the Proton acceptor in catalysis. Residues Arg342 and Arg383 each coordinate phosphoenolpyruvate.

It belongs to the EPSP synthase family. As to quaternary structure, monomer.

The protein resides in the cytoplasm. The catalysed reaction is 3-phosphoshikimate + phosphoenolpyruvate = 5-O-(1-carboxyvinyl)-3-phosphoshikimate + phosphate. Its pathway is metabolic intermediate biosynthesis; chorismate biosynthesis. Catalyzes the transfer of the enolpyruvyl moiety of phosphoenolpyruvate (PEP) to the 5-hydroxyl of shikimate-3-phosphate (S3P) to produce enolpyruvyl shikimate-3-phosphate and inorganic phosphate. This is 3-phosphoshikimate 1-carboxyvinyltransferase from Methanosarcina acetivorans (strain ATCC 35395 / DSM 2834 / JCM 12185 / C2A).